Reading from the N-terminus, the 404-residue chain is Argininosuccinate synthase (404 aa).

An ATP-binding site is contributed by 9–17; that stretch reads AYSGGLDTS. Y86 is a binding site for L-citrulline. Position 116 (G116) interacts with ATP. The L-aspartate site is built by T118, N122, and D123. N122 contacts L-citrulline. R126, S174, S183, E259, and Y271 together coordinate L-citrulline.

This sequence belongs to the argininosuccinate synthase family. Type 1 subfamily. As to quaternary structure, homotetramer.

It localises to the cytoplasm. It carries out the reaction L-citrulline + L-aspartate + ATP = 2-(N(omega)-L-arginino)succinate + AMP + diphosphate + H(+). It participates in amino-acid biosynthesis; L-arginine biosynthesis; L-arginine from L-ornithine and carbamoyl phosphate: step 2/3. This is Argininosuccinate synthase from Listeria monocytogenes serotype 4b (strain CLIP80459).